Here is a 535-residue protein sequence, read N- to C-terminus: Phosphoenolpyruvate carboxykinase (ATP) (535 aa).

Substrate contacts are provided by Arg59, Tyr201, and Lys207. Residues Lys207, His226, and 243–251 contribute to the ATP site; that span reads GLSGTGKTT. 2 residues coordinate Mn(2+): Lys207 and His226. Asp264 contacts Mn(2+). Residues Glu292, Arg328, 444-445, and Thr450 contribute to the ATP site; that span reads RI. Residue Arg328 participates in substrate binding.

Belongs to the phosphoenolpyruvate carboxykinase (ATP) family. It depends on Mn(2+) as a cofactor.

The protein localises to the cytoplasm. The catalysed reaction is oxaloacetate + ATP = phosphoenolpyruvate + ADP + CO2. The protein operates within carbohydrate biosynthesis; gluconeogenesis. In terms of biological role, involved in the gluconeogenesis. Catalyzes the conversion of oxaloacetate (OAA) to phosphoenolpyruvate (PEP) through direct phosphoryl transfer between the nucleoside triphosphate and OAA. The protein is Phosphoenolpyruvate carboxykinase (ATP) of Bacteroides thetaiotaomicron (strain ATCC 29148 / DSM 2079 / JCM 5827 / CCUG 10774 / NCTC 10582 / VPI-5482 / E50).